Reading from the N-terminus, the 546-residue chain is Arginine--tRNA ligase (546 aa).

Positions 117 to 127 (ANPTGPLHIGR) match the 'HIGH' region motif.

The protein belongs to the class-I aminoacyl-tRNA synthetase family.

The protein localises to the cytoplasm. The enzyme catalyses tRNA(Arg) + L-arginine + ATP = L-arginyl-tRNA(Arg) + AMP + diphosphate. The sequence is that of Arginine--tRNA ligase from Thermoplasma acidophilum (strain ATCC 25905 / DSM 1728 / JCM 9062 / NBRC 15155 / AMRC-C165).